A 326-amino-acid polypeptide reads, in one-letter code: Transposase InsH for insertion sequence element IS5H (326 aa).

It belongs to the transposase 11 family.

Involved in the transposition of the insertion sequence IS5. This Escherichia coli (strain K12) protein is Transposase InsH for insertion sequence element IS5H (insH6).